Reading from the N-terminus, the 61-residue chain is Defensin BmKDfsin2 (61 aa).

Residues 1–24 (METIVLLFLLALVFCTLEMGMVEA) form the signal peptide. 3 cysteine pairs are disulfide-bonded: Cys28–Cys49, Cys35–Cys57, and Cys39–Cys59.

It belongs to the invertebrate defensin family. Type 2 subfamily. In terms of tissue distribution, highly expressed in non-venom gland (hemolymph) and moderately expressed in venom gland.

The protein localises to the secreted. Antibacterial peptide active against Gram-positive bacteria, but not on Gram-negative bacteria. Also has weak blocking activity on Kv1.1/KCNA1, Kv1.2/KCNA2, Kv1.3/KCNA3, KCa3.1/KCNN4/IK, KCa2.3/KCNN3/SK3 and Kv11.1/KCNH2/ERG1 channels (tested at 1 uM). It inhibits potassium channel current by interacting with the pore region. The polypeptide is Defensin BmKDfsin2 (Olivierus martensii (Manchurian scorpion)).